Here is a 143-residue protein sequence, read N- to C-terminus: Ribosome-binding factor A (143 aa).

The tract at residues 123–143 is disordered; that stretch reads DKSLQENYKQNDKETKAEKLR.

It belongs to the RbfA family. In terms of assembly, monomer. Binds 30S ribosomal subunits, but not 50S ribosomal subunits or 70S ribosomes.

The protein resides in the cytoplasm. Its function is as follows. One of several proteins that assist in the late maturation steps of the functional core of the 30S ribosomal subunit. Associates with free 30S ribosomal subunits (but not with 30S subunits that are part of 70S ribosomes or polysomes). Required for efficient processing of 16S rRNA. May interact with the 5'-terminal helix region of 16S rRNA. The protein is Ribosome-binding factor A of Francisella tularensis subsp. mediasiatica (strain FSC147).